A 300-amino-acid chain; its full sequence is NAD kinase (300 aa).

The active-site Proton acceptor is the Asp75. NAD(+) is bound by residues 75–76, 149–150, Arg177, Asp179, 190–195, Ala214, and Gln248; these read DG, ND, and TAYALS.

The protein belongs to the NAD kinase family. A divalent metal cation is required as a cofactor.

It localises to the cytoplasm. The enzyme catalyses NAD(+) + ATP = ADP + NADP(+) + H(+). Functionally, involved in the regulation of the intracellular balance of NAD and NADP, and is a key enzyme in the biosynthesis of NADP. Catalyzes specifically the phosphorylation on 2'-hydroxyl of the adenosine moiety of NAD to yield NADP. The polypeptide is NAD kinase (Paraburkholderia phymatum (strain DSM 17167 / CIP 108236 / LMG 21445 / STM815) (Burkholderia phymatum)).